The sequence spans 514 residues: MLTRVKSAVANFMGGIMAGSSGSEHGGGSCGGSDLPLRFPYGRPEFLGLSQDEVECSADHIARPILILKETRRLPWATGYAEVINAGKSTHNEDQASCEVLTVKKKAGAVTSTPNRNSSKRRSSLPNGEGLQLKENSESEGVSCHYWSLFDGHAGSGAAVVASRLLQHHITEQLQDIVDILKNSAVLPPTCLGEEPENTPANSRTLTRAASLRGGVGAPGSPSTPPTRFFTEKKIPHECLVIGALESAFKEMDLQIERERSSYNISGGCTALIVICLLGKLYVANAGDSRAIIIRNGEIIPMSSEFTPETERQRLQYLAFMQPHLLGNEFTHLEFPRRVQRKELGKKMLYRDFNMTGWAYKTIEDEDLKFPLIYGEGKKARVMATIGVTRGLGDHDLKVHDSNIYIKPFLSSAPEVRIYDLSKYDHGSDDVLILATDGLWDVLSNEEVAEAITQFLPNCDPDDPHRYTLAAQDLVMRARGVLKDRGWRISNDRLGSGDDISVYVIPLIHGNKLS.

The residue at position 7 (S7) is a Phosphoserine. Residues 77–507 form the PPM-type phosphatase domain; that stretch reads ATGYAEVINA…DDISVYVIPL (431 aa). Positions 109–135 are disordered; sequence AVTSTPNRNSSKRRSSLPNGEGLQLKE. T113 is subject to Phosphothreonine. S124 and S211 each carry phosphoserine. R213 bears the Omega-N-methylarginine mark. A Phosphoserine modification is found at S221. T224 carries the phosphothreonine modification. S422 is subject to Phosphoserine.

The protein belongs to the PP2C family.

It localises to the nucleus. Its subcellular location is the cytoplasm. The catalysed reaction is O-phospho-L-seryl-[protein] + H2O = L-seryl-[protein] + phosphate. It catalyses the reaction O-phospho-L-threonyl-[protein] + H2O = L-threonyl-[protein] + phosphate. Functionally, dephosphorylates CDKN1B at 'Thr-187', thus removing a signal for proteasomal degradation. The polypeptide is Protein phosphatase 1H (PPM1H) (Homo sapiens (Human)).